The sequence spans 299 residues: Foldase protein PrsA (299 aa).

An N-terminal signal peptide occupies residues 1 to 19 (MKKWTIAASLSIGVLALSA). Cys-20 carries the N-palmitoyl cysteine lipid modification. A lipid anchor (S-diacylglycerol cysteine) is attached at Cys-20. Residues 137–227 (NTEIQAQHIL…HGTHIIKVND (91 aa)) enclose the PpiC domain.

This sequence belongs to the PrsA family.

The protein resides in the cell membrane. The catalysed reaction is [protein]-peptidylproline (omega=180) = [protein]-peptidylproline (omega=0). In terms of biological role, plays a major role in protein secretion by helping the post-translocational extracellular folding of several secreted proteins. The chain is Foldase protein PrsA from Oceanobacillus iheyensis (strain DSM 14371 / CIP 107618 / JCM 11309 / KCTC 3954 / HTE831).